Consider the following 348-residue polypeptide: MEKAENEKKPSAVSDVGAWAMNVTSSVGIIMANKQLMSSSGFGFSFATTLTGFHFALTALVGMVSNATGLSASKHVPLWELLWFSLVANISIAAMNFSLMLNSVGFYQISKLSMIPVVCVMEWVLHSKHYSREVKASVMVVVVGVGICTVTDVKVNAKGFICACTAVFSTSLQQISIGSLQKKYSIGSFELLSKTAPIQAISLLIFGPFVDYFLSGRFISTYKMTYSAMLCILLSCALAVFCNISQYLCIGRFSATSFQVLGHMKTVCVLTLGWLIFDSEMTFKNIAGMVLAVVGMVIYSWAVELEKQRKSKVIPHGKHSMTEDEIKLLKEGIEHMDLKDMELGNNKA.

10 helical membrane passes run 12-32 (AVSD…IIMA), 44-64 (FSFA…VGMV), 81-101 (LLWF…SLML), 104-124 (VGFY…MEWV), 133-153 (EVKA…VTDV), 160-180 (FICA…IGSL), 196-216 (APIQ…FLSG), 230-250 (LCIL…YLCI), 257-277 (SFQV…WLIF), and 286-306 (IAGM…VELE).

The protein belongs to the TPT transporter family. TPT (TC 2.A.7.9) subfamily.

It is found in the golgi apparatus membrane. Nucleotide-sugar transporter that transports UDP-rhamnose or UDP-galactose and UMP in a strict counter-exchange mode. The chain is UDP-rhamnose/UDP-galactose transporter 2 from Arabidopsis thaliana (Mouse-ear cress).